The sequence spans 131 residues: D-ribose pyranase (131 aa).

Catalysis depends on His20, which acts as the Proton donor. Substrate contacts are provided by residues Asp28, His98, and 120-122; that span reads FSN.

It belongs to the RbsD / FucU family. RbsD subfamily. As to quaternary structure, homodecamer.

It is found in the cytoplasm. It catalyses the reaction beta-D-ribopyranose = beta-D-ribofuranose. It participates in carbohydrate metabolism; D-ribose degradation; D-ribose 5-phosphate from beta-D-ribopyranose: step 1/2. Its function is as follows. Catalyzes the interconversion of beta-pyran and beta-furan forms of D-ribose. In Levilactobacillus brevis (strain ATCC 367 / BCRC 12310 / CIP 105137 / JCM 1170 / LMG 11437 / NCIMB 947 / NCTC 947) (Lactobacillus brevis), this protein is D-ribose pyranase.